The following is a 510-amino-acid chain: Acyl-CoA desaturase 1 (510 aa).

Over 1 to 112 the chain is Cytoplasmic; it reads MPTSGTTIEL…TLNNWHQHLN (112 aa). Residues 113-133 form a helical membrane-spanning segment; it reads WLNMVLVCGMPMIGWYFALSG. At 134–138 the chain is on the lumenal side; the sequence is KVPLH. A helical membrane pass occupies residues 139–159; it reads LNVFLFSVFYYAVGGVSITAG. Residues 160–255 lie on the Cytoplasmic side of the membrane; sequence YHRLWSHRSY…DWTIRFQHRH (96 aa). The Fe cation site is built by H161, H166, H198, H201, and H202. The Histidine box-1 signature appears at 161–166; the sequence is HRLWSH. The Histidine box-2 motif lies at 198 to 202; it reads HRIHH. A helical membrane pass occupies residues 256–276; sequence YILLMLLTAFVIPTLICGYFF. The Lumenal segment spans residues 277 to 280; sequence NDYM. The chain crosses the membrane as a helical span at residues 281–301; the sequence is GGLIYAGFIRVFVIQQATFCI. The Cytoplasmic portion of the chain corresponds to 302–510; that stretch reads NSLAHYIGTQ…GEIYETGKFF (209 aa). 4 residues coordinate Fe cation: H306, H335, H338, and H339. A Histidine box-3 motif is present at residues 335-339; the sequence is HNFHH. A Cytochrome b5 heme-binding domain is found at 409–487; the sequence is LPMWDKQTFL…LADMRVAVIK (79 aa). Residues H444 and H470 each contribute to the heme site.

Belongs to the fatty acid desaturase type 1 family. The cofactor is Fe(2+).

Its subcellular location is the endoplasmic reticulum membrane. It carries out the reaction octadecanoyl-CoA + 2 Fe(II)-[cytochrome b5] + O2 + 2 H(+) = (9Z)-octadecenoyl-CoA + 2 Fe(III)-[cytochrome b5] + 2 H2O. The enzyme catalyses hexadecanoyl-CoA + 2 Fe(II)-[cytochrome b5] + O2 + 2 H(+) = (9Z)-hexadecenoyl-CoA + 2 Fe(III)-[cytochrome b5] + 2 H2O. Stearoyl-CoA desaturase that utilizes O(2) and electrons from reduced cytochrome b5 to introduce the first double bond into saturated fatty acyl-CoA substrates. Catalyzes the insertion of a cis double bond at the delta-9 position into fatty acyl-CoA substrates including palmitoyl-CoA and stearoyl-CoA. Required for the biosynthesis of membrane phospholipids, cholesterol esters and triglycerides. Regulates fatty acid desaturation, that is, the ratio of unsaturated versus saturated fatty acyl chains, by competing with the acyltransferase STC1 for the common substrate C16:0-CoA. SCT1 sequesters C16:0-CoA into lipids, thereby shielding it from desaturation by OLE1. The polypeptide is Acyl-CoA desaturase 1 (OLE1) (Saccharomyces cerevisiae (strain ATCC 204508 / S288c) (Baker's yeast)).